Consider the following 525-residue polypeptide: ATP synthase subunit alpha (525 aa).

Position 171 to 178 (171 to 178 (GDRQTGKS)) interacts with ATP.

The protein belongs to the ATPase alpha/beta chains family. As to quaternary structure, F-type ATPases have 2 components, CF(1) - the catalytic core - and CF(0) - the membrane proton channel. CF(1) has five subunits: alpha(3), beta(3), gamma(1), delta(1), epsilon(1). CF(0) has three main subunits: a(1), b(2) and c(9-12). The alpha and beta chains form an alternating ring which encloses part of the gamma chain. CF(1) is attached to CF(0) by a central stalk formed by the gamma and epsilon chains, while a peripheral stalk is formed by the delta and b chains.

Its subcellular location is the cell inner membrane. It carries out the reaction ATP + H2O + 4 H(+)(in) = ADP + phosphate + 5 H(+)(out). Produces ATP from ADP in the presence of a proton gradient across the membrane. The alpha chain is a regulatory subunit. This chain is ATP synthase subunit alpha, found in Flavobacterium psychrophilum (strain ATCC 49511 / DSM 21280 / CIP 103535 / JIP02/86).